We begin with the raw amino-acid sequence, 326 residues long: Phospho-N-acetylmuramoyl-pentapeptide-transferase (326 aa).

The next 10 membrane-spanning stretches (helical) occupy residues G5–I25, T51–A71, V82–I102, I122–Y142, L148–S168, L180–I200, V204–A224, V229–L249, L252–I272, and V304–V324.

The protein belongs to the glycosyltransferase 4 family. MraY subfamily. Mg(2+) serves as cofactor.

It is found in the cell membrane. The catalysed reaction is UDP-N-acetyl-alpha-D-muramoyl-L-alanyl-gamma-D-glutamyl-meso-2,6-diaminopimeloyl-D-alanyl-D-alanine + di-trans,octa-cis-undecaprenyl phosphate = di-trans,octa-cis-undecaprenyl diphospho-N-acetyl-alpha-D-muramoyl-L-alanyl-D-glutamyl-meso-2,6-diaminopimeloyl-D-alanyl-D-alanine + UMP. Its pathway is cell wall biogenesis; peptidoglycan biosynthesis. Its function is as follows. Catalyzes the initial step of the lipid cycle reactions in the biosynthesis of the cell wall peptidoglycan: transfers peptidoglycan precursor phospho-MurNAc-pentapeptide from UDP-MurNAc-pentapeptide onto the lipid carrier undecaprenyl phosphate, yielding undecaprenyl-pyrophosphoryl-MurNAc-pentapeptide, known as lipid I. This is Phospho-N-acetylmuramoyl-pentapeptide-transferase from Oceanobacillus iheyensis (strain DSM 14371 / CIP 107618 / JCM 11309 / KCTC 3954 / HTE831).